An 80-amino-acid chain; its full sequence is MSNTKTLEDNISFEEALRELEEIVKKIDNGQESLETAVNSFERGILLKNYCEKKLKEARLKIEKITKLADSTVILEETEV.

This sequence belongs to the XseB family. In terms of assembly, heterooligomer composed of large and small subunits.

It localises to the cytoplasm. It catalyses the reaction Exonucleolytic cleavage in either 5'- to 3'- or 3'- to 5'-direction to yield nucleoside 5'-phosphates.. In terms of biological role, bidirectionally degrades single-stranded DNA into large acid-insoluble oligonucleotides, which are then degraded further into small acid-soluble oligonucleotides. The chain is Exodeoxyribonuclease 7 small subunit from Rickettsia typhi (strain ATCC VR-144 / Wilmington).